The following is a 168-amino-acid chain: Thiol peroxidase (168 aa).

The Thioredoxin domain occupies 19-168; it reads PQAGSKAQAF…YDAALNVLKA (150 aa). The Cysteine sulfenic acid (-SOH) intermediate role is filled by Cys-61. An intrachain disulfide couples Cys-61 to Cys-95.

Belongs to the peroxiredoxin family. Tpx subfamily. Homodimer.

The enzyme catalyses a hydroperoxide + [thioredoxin]-dithiol = an alcohol + [thioredoxin]-disulfide + H2O. In terms of biological role, thiol-specific peroxidase that catalyzes the reduction of hydrogen peroxide and organic hydroperoxides to water and alcohols, respectively. Plays a role in cell protection against oxidative stress by detoxifying peroxides. The protein is Thiol peroxidase of Salmonella typhimurium (strain LT2 / SGSC1412 / ATCC 700720).